A 163-amino-acid chain; its full sequence is Ribonuclease P protein component (163 aa).

The tract at residues 1-68 (MDEKDVATQP…GGKLLSLKGD (68 aa)) is disordered. A compositionally biased stretch (polar residues) spans 8–19 (TQPQETGQNPRL).

Belongs to the RnpA family. In terms of assembly, consists of a catalytic RNA component (M1 or rnpB) and a protein subunit.

The catalysed reaction is Endonucleolytic cleavage of RNA, removing 5'-extranucleotides from tRNA precursor.. RNaseP catalyzes the removal of the 5'-leader sequence from pre-tRNA to produce the mature 5'-terminus. It can also cleave other RNA substrates such as 4.5S RNA. The protein component plays an auxiliary but essential role in vivo by binding to the 5'-leader sequence and broadening the substrate specificity of the ribozyme. This chain is Ribonuclease P protein component, found in Thermus thermophilus (strain ATCC BAA-163 / DSM 7039 / HB27).